The sequence spans 272 residues: S-adenosylmethionine decarboxylase proenzyme (272 aa).

The active-site Schiff-base intermediate with substrate; via pyruvic acid is the Ser-122. Position 122 is a pyruvic acid (Ser); by autocatalysis (Ser-122). Residue His-127 is the Proton acceptor; for processing activity of the active site. Catalysis depends on Cys-150, which acts as the Proton donor; for catalytic activity.

The protein belongs to the prokaryotic AdoMetDC family. Type 2 subfamily. As to quaternary structure, heterooctamer of four alpha and four beta chains arranged as a tetramer of alpha/beta heterodimers. It depends on pyruvate as a cofactor. Post-translationally, is synthesized initially as an inactive proenzyme. Formation of the active enzyme involves a self-maturation process in which the active site pyruvoyl group is generated from an internal serine residue via an autocatalytic post-translational modification. Two non-identical subunits are generated from the proenzyme in this reaction, and the pyruvate is formed at the N-terminus of the alpha chain, which is derived from the carboxyl end of the proenzyme. The post-translation cleavage follows an unusual pathway, termed non-hydrolytic serinolysis, in which the side chain hydroxyl group of the serine supplies its oxygen atom to form the C-terminus of the beta chain, while the remainder of the serine residue undergoes an oxidative deamination to produce ammonia and the pyruvoyl group blocking the N-terminus of the alpha chain.

It catalyses the reaction S-adenosyl-L-methionine + H(+) = S-adenosyl 3-(methylsulfanyl)propylamine + CO2. Its pathway is amine and polyamine biosynthesis; S-adenosylmethioninamine biosynthesis; S-adenosylmethioninamine from S-adenosyl-L-methionine: step 1/1. In terms of biological role, catalyzes the decarboxylation of S-adenosylmethionine to S-adenosylmethioninamine (dcAdoMet), the propylamine donor required for the synthesis of the polyamines spermine and spermidine from the diamine putrescine. The chain is S-adenosylmethionine decarboxylase proenzyme from Clostridium botulinum (strain Eklund 17B / Type B).